The following is a 295-amino-acid chain: Cop9 signalosome-interactor 1 (295 aa).

Component of a COP9 signalosome-like (CSN) complex, composed of RRI1/CSN5, CSN9, RRI2/CSN10, PCI8/CSN11, CSN12 and CSI1. In the complex, it probably interacts directly with CSN9 and CSN12. Interacts also with RPN5.

The protein resides in the cytoplasm. It is found in the nucleus. Component of the COP9 signalosome (CSN) complex that acts as an regulator of the ubiquitin (Ubl) conjugation pathway by mediating the deneddylation of the cullin subunit of SCF-type E3 ubiquitin-protein ligase complexes The CSN complex is involved in the regulation of the mating pheromone response. This Saccharomyces cerevisiae (strain ATCC 204508 / S288c) (Baker's yeast) protein is Cop9 signalosome-interactor 1 (CSI1).